The primary structure comprises 505 residues: Activin receptor type-1B (505 aa).

Residues 1-23 (MAESAGASSFFPLVVLLLAGSGG) form the signal peptide. At 24-126 (SGPRGIQALL…EHPSMWGPVE (103 aa)) the chain is on the extracellular side. N-linked (GlcNAc...) asparagine glycosylation occurs at asparagine 43. A helical membrane pass occupies residues 127 to 149 (LVGIIAGPVFLLFLIIIIVFLVI). The Cytoplasmic portion of the chain corresponds to 150–505 (NYHQRVYHNR…QLSVQEDVKI (356 aa)). Residues 177-206 (KTLQDLVYDLSTSGSGSGLPLFVQRTVART) enclose the GS domain. The 291-residue stretch at 207 to 497 (IVLQEIIGKG…LRIKKTLSQL (291 aa)) folds into the Protein kinase domain. Residues 213-221 (IGKGRFGEV) and lysine 234 each bind ATP. Residue aspartate 335 is the Proton acceptor of the active site. Position 380 is a phosphotyrosine (tyrosine 380).

Belongs to the protein kinase superfamily. TKL Ser/Thr protein kinase family. TGFB receptor subfamily. Forms an activin receptor complex with activin receptor type-2 (ACVR2A or ACVR2B). Part of a complex consisting of MAGI2/ARIP1, ACVR2A, ACVR1B and SMAD3. Interacts with SMAD2 and SMAD3. Interacts with SMAD7. Interacts with FKBP1A. Interacts with IGSF1. Interacts with CRIPTO. Interacts with TDP2. Interacts with TSC22D1/TSC-22. Mg(2+) is required as a cofactor. It depends on Mn(2+) as a cofactor. Post-translationally, autophosphorylated. Phosphorylated by activin receptor type-2 (ACVR2A or ACVR2B) in response to activin-binding at serine and threonine residues in the GS domain. Phosphorylation of ACVR1B by activin receptor type-2 regulates association with SMAD7. Ubiquitinated. Level of ubiquitination is regulated by the SMAD7-SMURF1 complex. In terms of processing, ubiquitinated. Urogenital ridge, testis, ovary, brain and lungs.

It localises to the cell membrane. It catalyses the reaction L-threonyl-[receptor-protein] + ATP = O-phospho-L-threonyl-[receptor-protein] + ADP + H(+). It carries out the reaction L-seryl-[receptor-protein] + ATP = O-phospho-L-seryl-[receptor-protein] + ADP + H(+). With respect to regulation, activin receptor type-2 (ACVR2A or ACVR2B) activates the type-1 receptor through phosphorylation of its regulatory GS domain. Functionally, transmembrane serine/threonine kinase activin type-1 receptor forming an activin receptor complex with activin receptor type-2 (ACVR2A or ACVR2B). Transduces the activin signal from the cell surface to the cytoplasm and is thus regulating a many physiological and pathological processes including neuronal differentiation and neuronal survival, hair follicle development and cycling, FSH production by the pituitary gland, wound healing, extracellular matrix production, immunosuppression and carcinogenesis. Activin is also thought to have a paracrine or autocrine role in follicular development in the ovary. Within the receptor complex, type-2 receptors (ACVR2A and/or ACVR2B) act as a primary activin receptors whereas the type-1 receptors like ACVR1B act as downstream transducers of activin signals. Activin binds to type-2 receptor at the plasma membrane and activates its serine-threonine kinase. The activated receptor type-2 then phosphorylates and activates the type-1 receptor such as ACVR1B. Once activated, the type-1 receptor binds and phosphorylates the SMAD proteins SMAD2 and SMAD3, on serine residues of the C-terminal tail. Soon after their association with the activin receptor and subsequent phosphorylation, SMAD2 and SMAD3 are released into the cytoplasm where they interact with the common partner SMAD4. This SMAD complex translocates into the nucleus where it mediates activin-induced transcription. Inhibitory SMAD7, which is recruited to ACVR1B through FKBP1A, can prevent the association of SMAD2 and SMAD3 with the activin receptor complex, thereby blocking the activin signal. Activin signal transduction is also antagonized by the binding to the receptor of inhibin-B via the IGSF1 inhibin coreceptor. ACVR1B also phosphorylates TDP2. The polypeptide is Activin receptor type-1B (Acvr1b) (Rattus norvegicus (Rat)).